Reading from the N-terminus, the 445-residue chain is Histidinol dehydrogenase (445 aa).

The NAD(+) site is built by Y136, Q200, and N228. 3 residues coordinate substrate: T251, Q273, and H276. Zn(2+)-binding residues include Q273 and H276. Residues E342 and H343 each act as proton acceptor in the active site. Residues H343, D376, E430, and H435 each coordinate substrate. D376 lines the Zn(2+) pocket. H435 provides a ligand contact to Zn(2+).

The protein belongs to the histidinol dehydrogenase family. Zn(2+) serves as cofactor.

It carries out the reaction L-histidinol + 2 NAD(+) + H2O = L-histidine + 2 NADH + 3 H(+). It participates in amino-acid biosynthesis; L-histidine biosynthesis; L-histidine from 5-phospho-alpha-D-ribose 1-diphosphate: step 9/9. Functionally, catalyzes the sequential NAD-dependent oxidations of L-histidinol to L-histidinaldehyde and then to L-histidine. The polypeptide is Histidinol dehydrogenase (hisD) (Mycolicibacterium smegmatis (Mycobacterium smegmatis)).